The chain runs to 326 residues: Septum site-determining protein minD homolog, chloroplastic (326 aa).

The transit peptide at Met-1–Val-62 directs the protein to the chloroplast. Lys-67–Thr-74 provides a ligand contact to ATP.

Belongs to the ParA family. MinD subfamily. Homodimer. Interacts with MINE1. Binds to ARC3. Interacts with MCD1. Interacts with CDP1/PARC6.

Its subcellular location is the plastid. The protein localises to the chloroplast inner membrane. Stimulated ATPase activity by MINE1. Functionally, together with ARC3 and MCD1, regulates FtsZ ring positioning in chloroplasts in an ARC6-dependent manner. Calcium-dependent ATPase required for the correct placement of the plastid division site. Inhibits FtsZ filament and ring formation in the plastid. Mediates inhibition of plastid division. In cooperation with MINE1, prevents FtsZ ring formation anywhere outside of the mid-plastids. In Arabidopsis thaliana (Mouse-ear cress), this protein is Septum site-determining protein minD homolog, chloroplastic.